A 405-amino-acid polypeptide reads, in one-letter code: Arginine biosynthesis bifunctional protein ArgJ (405 aa).

6 residues coordinate substrate: Thr167, Lys190, Thr201, Glu281, Asn400, and Ser405. Catalysis depends on Thr201, which acts as the Nucleophile.

The protein belongs to the ArgJ family. As to quaternary structure, heterotetramer of two alpha and two beta chains.

The protein localises to the cytoplasm. It carries out the reaction N(2)-acetyl-L-ornithine + L-glutamate = N-acetyl-L-glutamate + L-ornithine. The enzyme catalyses L-glutamate + acetyl-CoA = N-acetyl-L-glutamate + CoA + H(+). Its pathway is amino-acid biosynthesis; L-arginine biosynthesis; L-ornithine and N-acetyl-L-glutamate from L-glutamate and N(2)-acetyl-L-ornithine (cyclic): step 1/1. The protein operates within amino-acid biosynthesis; L-arginine biosynthesis; N(2)-acetyl-L-ornithine from L-glutamate: step 1/4. Its function is as follows. Catalyzes two activities which are involved in the cyclic version of arginine biosynthesis: the synthesis of N-acetylglutamate from glutamate and acetyl-CoA as the acetyl donor, and of ornithine by transacetylation between N(2)-acetylornithine and glutamate. This chain is Arginine biosynthesis bifunctional protein ArgJ, found in Nocardia farcinica (strain IFM 10152).